The following is a 528-amino-acid chain: D-3-phosphoglycerate dehydrogenase (528 aa).

NAD(+) contacts are provided by residues Arg151–Ile152, Asp171, Ala230–Arg232, and Asp256. Arg232 is an active-site residue. Glu261 is an active-site residue. The Proton donor role is filled by His279. His279–Ala282 provides a ligand contact to NAD(+). One can recognise an ACT domain in the interval Asn455–Ser528.

This sequence belongs to the D-isomer specific 2-hydroxyacid dehydrogenase family.

The enzyme catalyses (2R)-3-phosphoglycerate + NAD(+) = 3-phosphooxypyruvate + NADH + H(+). It carries out the reaction (R)-2-hydroxyglutarate + NAD(+) = 2-oxoglutarate + NADH + H(+). It participates in amino-acid biosynthesis; L-serine biosynthesis; L-serine from 3-phospho-D-glycerate: step 1/3. Its function is as follows. Catalyzes the reversible oxidation of 3-phospho-D-glycerate to 3-phosphonooxypyruvate, the first step of the phosphorylated L-serine biosynthesis pathway. Also catalyzes the reversible oxidation of 2-hydroxyglutarate to 2-oxoglutarate. The polypeptide is D-3-phosphoglycerate dehydrogenase (serA) (Mycobacterium leprae (strain TN)).